A 660-amino-acid polypeptide reads, in one-letter code: Bifunctional polymyxin resistance protein ArnA (660 aa).

A formyltransferase ArnAFT region spans residues 1 to 304; that stretch reads MKAVIFAYHD…TLGLVAGARL (304 aa). His-104 serves as the catalytic Proton donor; for formyltransferase activity. Residues Arg-114 and 136–140 contribute to the (6R)-10-formyltetrahydrofolate site; that span reads VKRAD. The tract at residues 314 to 660 is dehydrogenase ArnADH; the sequence is RRIRVLILGV…RSVDVAERAS (347 aa). Residues Asp-347 and 368 to 369 contribute to the NAD(+) site; that span reads DI. UDP-alpha-D-glucuronate-binding positions include Ala-393, Tyr-398, and 432–433; that span reads TS. Glu-434 acts as the Proton acceptor; for decarboxylase activity in catalysis. UDP-alpha-D-glucuronate-binding positions include Arg-460, Asn-492, 526-535, and Tyr-613; that span reads KLIDGGQQKR. The active-site Proton donor; for decarboxylase activity is Arg-619.

It in the N-terminal section; belongs to the Fmt family. UDP-L-Ara4N formyltransferase subfamily. This sequence in the C-terminal section; belongs to the NAD(P)-dependent epimerase/dehydratase family. UDP-glucuronic acid decarboxylase subfamily. As to quaternary structure, homohexamer, formed by a dimer of trimers.

It catalyses the reaction UDP-alpha-D-glucuronate + NAD(+) = UDP-beta-L-threo-pentopyranos-4-ulose + CO2 + NADH. The enzyme catalyses UDP-4-amino-4-deoxy-beta-L-arabinose + (6R)-10-formyltetrahydrofolate = UDP-4-deoxy-4-formamido-beta-L-arabinose + (6S)-5,6,7,8-tetrahydrofolate + H(+). The protein operates within nucleotide-sugar biosynthesis; UDP-4-deoxy-4-formamido-beta-L-arabinose biosynthesis; UDP-4-deoxy-4-formamido-beta-L-arabinose from UDP-alpha-D-glucuronate: step 1/3. Its pathway is nucleotide-sugar biosynthesis; UDP-4-deoxy-4-formamido-beta-L-arabinose biosynthesis; UDP-4-deoxy-4-formamido-beta-L-arabinose from UDP-alpha-D-glucuronate: step 3/3. It functions in the pathway bacterial outer membrane biogenesis; lipopolysaccharide biosynthesis. Bifunctional enzyme that catalyzes the oxidative decarboxylation of UDP-glucuronic acid (UDP-GlcUA) to UDP-4-keto-arabinose (UDP-Ara4O) and the addition of a formyl group to UDP-4-amino-4-deoxy-L-arabinose (UDP-L-Ara4N) to form UDP-L-4-formamido-arabinose (UDP-L-Ara4FN). The modified arabinose is attached to lipid A and is required for resistance to polymyxin and cationic antimicrobial peptides. The polypeptide is Bifunctional polymyxin resistance protein ArnA (Salmonella dublin (strain CT_02021853)).